The primary structure comprises 1610 residues: Adenylate cyclase type 10 (1610 aa).

2 consecutive Guanylate cyclase domains span residues 42–179 and 293–418; these read VLMF…RLAQ and TIVF…ARMM. Mg(2+) contacts are provided by aspartate 47 and isoleucine 48. 47 to 52 serves as a coordination point for ATP; that stretch reads DISGFT. Lysine 95 contacts hydrogencarbonate. Aspartate 99 is a binding site for Mg(2+). ATP contacts are provided by aspartate 99 and lysine 144. Hydrogencarbonate-binding residues include valine 167, arginine 176, and methionine 337. Residues valine 406 and 412-416 contribute to the ATP site; that span reads NLAAR.

Belongs to the adenylyl cyclase class-4/guanylyl cyclase family. Mg(2+) serves as cofactor. The cofactor is Mn(2+). Cleavage may occur to generate the active 48 kDa form. Detected in airway epithelial cells and testis (at protein level). Weakly expressed in multiple tissues. Expressed in brain, heart, kidney, liver, lung, pancreas, peripheral blood leukocytes, placenta, skeletal muscle, stomach, thymus, airway epithelial cells, duodenum, jejunum and ileum. Very low level of expression in bone.

It localises to the cell membrane. The protein localises to the cytoplasm. Its subcellular location is the cytoskeleton. The protein resides in the perinuclear region. It is found in the nucleus. It localises to the cell projection. The protein localises to the cilium. Its subcellular location is the mitochondrion. The enzyme catalyses ATP = 3',5'-cyclic AMP + diphosphate. Its activity is regulated as follows. Activated by manganese or magnesium ions. In the presence of magnesium ions, the enzyme is activated by bicarbonate. In the presence of manganese ions, the enzyme is inhibited by bicarbonate. In the absence of magnesium and bicarbonate, the enzyme is weakly activated by calcium. Calcium mildly increases the enzyme activity, also in the presence of magnesium ions. Its function is as follows. Catalyzes the formation of the signaling molecule cAMP. May function as sensor that mediates responses to changes in cellular bicarbonate and CO(2) levels. Has a critical role in mammalian spermatogenesis by producing the cAMP which regulates cAMP-responsive nuclear factors indispensable for sperm maturation in the epididymis. Induces capacitation, the maturational process that sperm undergo prior to fertilization. Involved in ciliary beat regulation. This is Adenylate cyclase type 10 (ADCY10) from Homo sapiens (Human).